Consider the following 380-residue polypeptide: Endopolygalacturonase AN8327 (380 aa).

Positions 1-19 (MFYALGPLALFAFATEVMA) are cleaved as a signal peptide. The propeptide occupies 20–35 (TPVAYPMTTASPTLAK). C39 and C57 are oxidised to a cystine. 7 PbH1 repeats span residues 147-169 (LTDS…SING), 170-200 (CDGL…DIGE), 201-222 (SSNV…AVNS), 223-243 (GTSI…SIGS), 252-273 (VDTV…RIKA), 281-303 (IKGV…LIEQ), and 315-338 (TSGI…DSDG). The active-site Proton donor is D215. C217 and C233 are joined by a disulfide. H237 is a catalytic residue. An N-linked (GlcNAc...) asparagine glycan is attached at N327. C345 and C350 are disulfide-bonded. N352 is a glycosylation site (N-linked (GlcNAc...) asparagine). The cysteines at positions 369 and 378 are disulfide-linked.

Belongs to the glycosyl hydrolase 28 family.

It localises to the secreted. The catalysed reaction is (1,4-alpha-D-galacturonosyl)n+m + H2O = (1,4-alpha-D-galacturonosyl)n + (1,4-alpha-D-galacturonosyl)m.. Functionally, involved in maceration and soft-rotting of plant tissue. Hydrolyzes the 1,4-alpha glycosidic bonds of de-esterified pectate in the smooth region of the plant cell wall. The chain is Endopolygalacturonase AN8327 from Emericella nidulans (strain FGSC A4 / ATCC 38163 / CBS 112.46 / NRRL 194 / M139) (Aspergillus nidulans).